Consider the following 40-residue polypeptide: Photosystem II reaction center protein J (40 aa).

Residues 10–30 (LWLVGTVAGTLVIGLLGVFFY) form a helical membrane-spanning segment.

This sequence belongs to the PsbJ family. In terms of assembly, PSII is composed of 1 copy each of membrane proteins PsbA, PsbB, PsbC, PsbD, PsbE, PsbF, PsbH, PsbI, PsbJ, PsbK, PsbL, PsbM, PsbT, PsbX, PsbY, PsbZ, Psb30/Ycf12, at least 3 peripheral proteins of the oxygen-evolving complex and a large number of cofactors. It forms dimeric complexes.

Its subcellular location is the plastid. It localises to the chloroplast thylakoid membrane. Functionally, one of the components of the core complex of photosystem II (PSII). PSII is a light-driven water:plastoquinone oxidoreductase that uses light energy to abstract electrons from H(2)O, generating O(2) and a proton gradient subsequently used for ATP formation. It consists of a core antenna complex that captures photons, and an electron transfer chain that converts photonic excitation into a charge separation. The sequence is that of Photosystem II reaction center protein J from Adiantum capillus-veneris (Maidenhair fern).